A 340-amino-acid polypeptide reads, in one-letter code: Phosphate acyltransferase (340 aa).

Belongs to the PlsX family. Homodimer. Probably interacts with PlsY.

Its subcellular location is the cytoplasm. It carries out the reaction a fatty acyl-[ACP] + phosphate = an acyl phosphate + holo-[ACP]. It participates in lipid metabolism; phospholipid metabolism. In terms of biological role, catalyzes the reversible formation of acyl-phosphate (acyl-PO(4)) from acyl-[acyl-carrier-protein] (acyl-ACP). This enzyme utilizes acyl-ACP as fatty acyl donor, but not acyl-CoA. This chain is Phosphate acyltransferase, found in Leptospira biflexa serovar Patoc (strain Patoc 1 / ATCC 23582 / Paris).